A 98-amino-acid polypeptide reads, in one-letter code: MSMVYINIFMAFTVSLMGLLVYRSHLMSSLLCLEGMMLSLFIMMTMAILNNHFTLASMAPIILLVFAACEAALGLSLLVMVSNTYGTDYVQNLNLLQC.

Helical transmembrane passes span 1 to 21, 29 to 49, and 61 to 81; these read MSMV…GLLV, SLLC…MAIL, and IILL…LVMV.

It belongs to the complex I subunit 4L family. Core subunit of respiratory chain NADH dehydrogenase (Complex I) which is composed of 45 different subunits.

It localises to the mitochondrion inner membrane. It carries out the reaction a ubiquinone + NADH + 5 H(+)(in) = a ubiquinol + NAD(+) + 4 H(+)(out). Core subunit of the mitochondrial membrane respiratory chain NADH dehydrogenase (Complex I) which catalyzes electron transfer from NADH through the respiratory chain, using ubiquinone as an electron acceptor. Part of the enzyme membrane arm which is embedded in the lipid bilayer and involved in proton translocation. This is NADH-ubiquinone oxidoreductase chain 4L (MT-ND4L) from Lynx canadensis (Canada lynx).